Here is an 84-residue protein sequence, read N- to C-terminus: U8-theraphotoxin-Hhn1b (84 aa).

Positions methionine 1 to cysteine 21 are cleaved as a signal peptide. Disulfide bonds link cysteine 23–cysteine 35, cysteine 29–cysteine 44, cysteine 34–cysteine 67, and cysteine 54–cysteine 75.

It belongs to the AVIT (prokineticin) family. Expressed by the venom gland.

The protein localises to the secreted. This is U8-theraphotoxin-Hhn1b from Cyriopagopus hainanus (Chinese bird spider).